A 172-amino-acid chain; its full sequence is Small ribosomal subunit protein uS5 (172 aa).

One can recognise an S5 DRBM domain in the interval 16–79 (LKEKLVHINR…EDGKKNVIKV (64 aa)).

This sequence belongs to the universal ribosomal protein uS5 family. In terms of assembly, part of the 30S ribosomal subunit. Contacts proteins S4 and S8.

In terms of biological role, with S4 and S12 plays an important role in translational accuracy. Located at the back of the 30S subunit body where it stabilizes the conformation of the head with respect to the body. This is Small ribosomal subunit protein uS5 from Pelodictyon phaeoclathratiforme (strain DSM 5477 / BU-1).